A 570-amino-acid polypeptide reads, in one-letter code: Peptidyl-prolyl cis-trans isomerase FKBP9 (570 aa).

The first 24 residues, 1–24 (MAFRGWRPPPPPLLLLLLWVTGQA), serve as a signal peptide directing secretion. PPIase FKBP-type domains are found at residues 54–142 (GDFV…MDIW), 166–254 (SDFV…LDLH), 278–365 (GDFL…IDFH), and 389–477 (GDYL…LELV). Asn174, Asn286, Asn302, and Asn397 each carry an N-linked (GlcNAc...) asparagine glycan. 2 consecutive EF-hand domains span residues 488-523 (WNGE…QVAS) and 533-568 (DAEL…AKHD). Residues Asp501, Asp503, Asn505, Glu507, Glu512, Asp546, Asn548, Asp550, Lys552, and Glu557 each coordinate Ca(2+). The Prevents secretion from ER signature appears at 567–570 (HDEL).

Post-translationally, phosphorylated.

The protein localises to the endoplasmic reticulum. The catalysed reaction is [protein]-peptidylproline (omega=180) = [protein]-peptidylproline (omega=0). Its activity is regulated as follows. Inhibited by FK506. Its function is as follows. PPIases accelerate the folding of proteins during protein synthesis. This chain is Peptidyl-prolyl cis-trans isomerase FKBP9 (FKBP9), found in Homo sapiens (Human).